The sequence spans 456 residues: Cobyrinate a,c-diamide synthase (456 aa).

The region spanning 247–439 (PIAIARDRAF…LHLHFGGKPW (193 aa)) is the GATase cobBQ-type domain. C330 acts as the Nucleophile in catalysis.

The protein belongs to the CobB/CbiA family. Requires Mg(2+) as cofactor.

The enzyme catalyses cob(II)yrinate + 2 L-glutamine + 2 ATP + 2 H2O = cob(II)yrinate a,c diamide + 2 L-glutamate + 2 ADP + 2 phosphate + 2 H(+). The protein operates within cofactor biosynthesis; adenosylcobalamin biosynthesis; cob(II)yrinate a,c-diamide from sirohydrochlorin (anaerobic route): step 10/10. Catalyzes the ATP-dependent amidation of the two carboxylate groups at positions a and c of cobyrinate, using either L-glutamine or ammonia as the nitrogen source. This Synechococcus sp. (strain ATCC 27144 / PCC 6301 / SAUG 1402/1) (Anacystis nidulans) protein is Cobyrinate a,c-diamide synthase.